Here is a 204-residue protein sequence, read N- to C-terminus: Recombination protein RecR (204 aa).

Residues 63–78 (CNRCFNITVEDPCTIC) form a C4-type zinc finger. Residues 86 to 181 (RQVCVVEEPL…RVTRLARGLP (96 aa)) form the Toprim domain.

Belongs to the RecR family.

May play a role in DNA repair. It seems to be involved in an RecBC-independent recombinational process of DNA repair. It may act with RecF and RecO. The chain is Recombination protein RecR from Herpetosiphon aurantiacus (strain ATCC 23779 / DSM 785 / 114-95).